A 396-amino-acid chain; its full sequence is Cysteine desulfurase (396 aa).

Pyridoxal 5'-phosphate contacts are provided by residues 71–72 (GT), Asn-148, Gln-176, and 196–198 (SGH). An N6-(pyridoxal phosphate)lysine modification is found at Lys-199. Thr-231 provides a ligand contact to pyridoxal 5'-phosphate. Cys-319 (cysteine persulfide intermediate) is an active-site residue. A [2Fe-2S] cluster-binding site is contributed by Cys-319.

This sequence belongs to the class-V pyridoxal-phosphate-dependent aminotransferase family. NifS/IscS subfamily. In terms of assembly, homodimer. Pyridoxal 5'-phosphate serves as cofactor.

It carries out the reaction (sulfur carrier)-H + L-cysteine = (sulfur carrier)-SH + L-alanine. In terms of biological role, catalyzes the removal of elemental sulfur atoms from cysteine to produce alanine. Seems to participate in the biosynthesis of the nitrogenase metalloclusters by providing the inorganic sulfur required for the Fe-S core formation. In Azotobacter chroococcum mcd 1, this protein is Cysteine desulfurase.